A 614-amino-acid polypeptide reads, in one-letter code: MRGVDVIKENLKHLPSRPGVYRMFGEAGEVLYVGKARDLKARVSNYTRMGGHTQRIARMISLTRAMEFVVTETETEALLLEASLVKSLKPRFNVLLRDDKSFPYILIRRNHEAPQIKKYRGSKQDEGDYFGPFANAGAVMRTLDTLQKAFLLRTCEDSVYSARTRPCMLHQIKRCAAPCVGLVSKEDYTALADEAADFLRGKAGELQKRLASEMEAASEAMEFETAARLRDRIRAIAHVRSTQDVNPDGIEEADVFAIAMDGGVSCVQVFFIRAGQNWGASAHFPRHEKDQTAPEILAAFLVQFYDKRPPPKLILVSEPPDQADLIEEALALKAGRRIELRRPERGTKRDLLTQAERNASEALSRKLAESASQERLLTEVQKVFDLAEAPQRIEVYDNSHIQGTNAVGGMIVAGPEGFRKQAYRKFNIKDTEITPGDDYGMMREVMRRRFARAMKEKVAGNVSDWPDLVLIDGGLGQLNATLETLAELGLTPDDVTLVSIAKGVDRNAGREQFFRPGKAPFKLPENAPVLYYLQRLRDEAHRWAIGAHRQKRAAEAARSPLDEIEGIGPTRKKALLHHFGSARGVSRAKVADLMEVDGVNEALAIRIYGHFNSG.

Residues 16-94 (SRPGVYRMFG…VKSLKPRFNV (79 aa)) enclose the GIY-YIG domain. Residues 204 to 239 (GELQKRLASEMEAASEAMEFETAARLRDRIRAIAHV) form the UVR domain.

This sequence belongs to the UvrC family. In terms of assembly, interacts with UvrB in an incision complex.

Its subcellular location is the cytoplasm. The UvrABC repair system catalyzes the recognition and processing of DNA lesions. UvrC both incises the 5' and 3' sides of the lesion. The N-terminal half is responsible for the 3' incision and the C-terminal half is responsible for the 5' incision. The polypeptide is UvrABC system protein C (Hyphomonas neptunium (strain ATCC 15444)).